Reading from the N-terminus, the 571-residue chain is Putative phospholipase B-like 1 (571 aa).

Positions 1-18 (MNWIFIFLAAAVAIGCEA) are cleaved as a signal peptide. N-linked (GlcNAc...) asparagine glycosylation is found at Asn62, Asn149, Asn442, and Asn473.

It belongs to the phospholipase B-like family.

Its subcellular location is the lysosome. Functionally, putative phospholipase. In Caenorhabditis elegans, this protein is Putative phospholipase B-like 1.